The following is a 206-amino-acid chain: Large ribosomal subunit protein uL4 (206 aa).

It belongs to the universal ribosomal protein uL4 family. In terms of assembly, part of the 50S ribosomal subunit.

Its function is as follows. One of the primary rRNA binding proteins, this protein initially binds near the 5'-end of the 23S rRNA. It is important during the early stages of 50S assembly. It makes multiple contacts with different domains of the 23S rRNA in the assembled 50S subunit and ribosome. In terms of biological role, forms part of the polypeptide exit tunnel. In Methylorubrum populi (strain ATCC BAA-705 / NCIMB 13946 / BJ001) (Methylobacterium populi), this protein is Large ribosomal subunit protein uL4.